We begin with the raw amino-acid sequence, 908 residues long: MKLSPSAGGVSDQPPSPPEVAEEQKCLNSELWHACAGPLVSLPAVGSRVVYFPQGHSEQVAASTNKEMESQIPNYPNLPPQLICQLHNVTMHADAETDEVYAQMTLQPLSPQELKDPFLPAELGTASKQPTNYFCKTLTASDTSTHGGFSVPRRAAEKVFPPLDFTQQPPAQELMAKDLHGNEWKFRHIFRGQPKRHLLTTGWSVFVSAKRLVAGDSVLFIWNDSNQLLLGIRRANRPQTVMPSSVLSSDSMHIGLLAAAAHAASTNSRFTIFYNPRASPSEFVIPLAKYVKAVYHTRISVGMRFRMLFETEESSVRRYMGTITGISDLDPVRWMNSHWRSVKVGWDESTAGERQPRVSLWEIEPLTTFPMYPSPFPLRLKRPWPTGLPSLYGGKEDDLASSLMWLRDSQNTGFQSLNFGGLGMSPWMQPRLDSSLLGLQPDMYQTIAAAAALQNTTKQVSPAMLQFQQPQNIVGRSSLLSSQILQQAQPQFQQMYHQNINGNSIQGHSQPEYLQQPLQHCQSFNEQKPQLQPQQQQQESHQQQPQHQQMQQQKHLSNFQTVPNALSVFSQLSSTPQSTPSTLQTVSPFSQQHNFPDTNISCLSPSNVSSMHDTLRSFPSEAASDLPGVPRITPVPVSDPWSSKRVAVESTITSRPHDISSQIENFDLTPSSIPQNSTLAPLPGRECLVDQDGSSDPQNHFLFGVNIDSQSLLMQDGIPSLHNENSSSTIPYSTSNFLSPSQDDYPLSQTLTTPGCLDESGYVPCSDNADQVKRPHATFVKVYKSGTVGRLLDITRFSSYHELRSEVGRLFGLEGQLEDPLRSGWQLVFVDREDDVLLVGDDPWQEFVNSVSCIKILSPQEVQQMGKPGIELFSTSARRLGNSCDNYMSRQESRSLSTGIASVGSVEF.

The interval 1 to 21 (MKLSPSAGGVSDQPPSPPEVA) is disordered. The segment at residues 134–236 (FCKTLTASDT…QLLLGIRRAN (103 aa)) is a DNA-binding region (TF-B3). The segment at 525–556 (NEQKPQLQPQQQQQESHQQQPQHQQMQQQKHL) is disordered. A compositionally biased stretch (low complexity) spans 526-556 (EQKPQLQPQQQQQESHQQQPQHQQMQQQKHL). Residues 777-861 (ATFVKVYKSG…SCIKILSPQE (85 aa)) enclose the PB1 domain.

The protein belongs to the ARF family. Homodimers and heterodimers.

The protein localises to the nucleus. Auxin response factors (ARFs) are transcriptional factors that bind specifically to the DNA sequence 5'-TGTCTC-3' found in the auxin-responsive promoter elements (AuxREs). The protein is Auxin response factor 6 (ARF6) of Oryza sativa subsp. indica (Rice).